Consider the following 445-residue polypeptide: MKMKAKWLPIAAAVTAALASQAAFAVDFHGYFRSGVGVSTDGSMQTGLSDNAKQKVGRLGNEADTYGEIQLGSEVFNKDGKTFYVDSMVAMTSNGSNDWESTESKFQCTSANGTALDGCENKEDATFALRQFNVQAKGLLGFAPEATLWAGKRYYQRHDVHISDFYYWNISGAGAGIEGIQAGPGKVSFAWVRNDRSGTNDGWTYNDEMNVNTLDLRYAGIPLWQDGSLEVGVDYAIANPSDAQKDSANAQYKNAKDGVMLTAELTQGILGGFNKTVLQYGTEGYSKTFAFWGDGSWYGAEAKDGADGFRIINHGVIPMGNSWEMGHQLVYGVGNDMWDTNDKWETMSVVARPMYKWDDFNKTIFEGGYFKDKNKSTNGTSEEDAGYKLTLAQAWSAGSSFWARPEIRVFASYLAQDKKEMKGNAFNNGTADDTWNFGVQAEAWW.

A signal peptide spans 1 to 25 (MKMKAKWLPIAAAVTAALASQAAFA).

This sequence belongs to the porin LamB (TC 1.B.3) family. As to quaternary structure, homotrimer formed of three 18-stranded antiparallel beta-barrels, containing three independent channels.

The protein resides in the cell outer membrane. The catalysed reaction is beta-maltose(in) = beta-maltose(out). Its function is as follows. Involved in the transport of maltose and maltodextrins. The polypeptide is Maltoporin 2 (Aeromonas salmonicida (strain A449)).